Consider the following 545-residue polypeptide: Probable bifunctional tRNA threonylcarbamoyladenosine biosynthesis protein (545 aa).

Residues 1–329 are kae1; the sequence is MDTSKDLICI…YRSDMVEVNW (329 aa). Residues His112, His116, and Tyr133 each contribute to the Fe cation site. L-threonylcarbamoyladenylate contacts are provided by residues 133-137, Asp165, Gly178, Glu182, and Asn262; that span reads YVSGG. Asp290 serves as a coordination point for Fe cation. Residues 344-545 form the Protein kinase domain; that stretch reads IIPEHLIGKG…KEVEKRARYL (202 aa). ATP contacts are provided by residues 350 to 358 and Lys371; that span reads IGKGAEADI. The Proton acceptor; for kinase activity role is filled by Asp463.

The protein in the N-terminal section; belongs to the KAE1 / TsaD family. In the C-terminal section; belongs to the protein kinase superfamily. Tyr protein kinase family. BUD32 subfamily. As to quaternary structure, component of the KEOPS complex that consists of Kae1, Bud32, Cgi121 and Pcc1; the whole complex dimerizes. Fe(2+) serves as cofactor.

Its subcellular location is the cytoplasm. The catalysed reaction is L-seryl-[protein] + ATP = O-phospho-L-seryl-[protein] + ADP + H(+). It carries out the reaction L-threonyl-[protein] + ATP = O-phospho-L-threonyl-[protein] + ADP + H(+). It catalyses the reaction L-threonylcarbamoyladenylate + adenosine(37) in tRNA = N(6)-L-threonylcarbamoyladenosine(37) in tRNA + AMP + H(+). In terms of biological role, required for the formation of a threonylcarbamoyl group on adenosine at position 37 (t(6)A37) in tRNAs that read codons beginning with adenine. Is a component of the KEOPS complex that is probably involved in the transfer of the threonylcarbamoyl moiety of threonylcarbamoyl-AMP (TC-AMP) to the N6 group of A37. The Kae1 domain likely plays a direct catalytic role in this reaction. The Bud32 domain probably displays kinase activity that regulates Kae1 function. In Methanococcus maripaludis (strain C5 / ATCC BAA-1333), this protein is Probable bifunctional tRNA threonylcarbamoyladenosine biosynthesis protein.